A 434-amino-acid polypeptide reads, in one-letter code: Gamma-enolase (434 aa).

His158 and Glu167 together coordinate substrate. Catalysis depends on Glu210, which acts as the Proton donor. Mg(2+) is bound by residues Asp245, Glu293, and Asp318. Residues Glu293 and Asp318 each contribute to the substrate site. Residue Lys343 is the Proton acceptor of the active site. Substrate contacts are provided by residues 370–373 (SHRS) and Lys394.

It belongs to the enolase family. Homodimer. The cofactor is Mg(2+). In terms of tissue distribution, expressed in the brain and, to much less but significant extents, in the pituitary and adrenal glands.

It is found in the cytoplasm. It catalyses the reaction (2R)-2-phosphoglycerate = phosphoenolpyruvate + H2O. Its pathway is carbohydrate degradation; glycolysis; pyruvate from D-glyceraldehyde 3-phosphate: step 4/5. In Gallus gallus (Chicken), this protein is Gamma-enolase (ENO2).